A 297-amino-acid chain; its full sequence is N-acetylneuraminate lyase (297 aa).

The aceneuramate site is built by Ser47 and Thr48. The active-site Proton donor is Tyr137. The active-site Schiff-base intermediate with substrate is Lys165. Thr167, Gly189, Asp191, Glu192, and Ser208 together coordinate aceneuramate.

Belongs to the DapA family. NanA subfamily. In terms of assembly, homotetramer.

It is found in the cytoplasm. The enzyme catalyses aceneuramate = aldehydo-N-acetyl-D-mannosamine + pyruvate. Its pathway is amino-sugar metabolism; N-acetylneuraminate degradation; D-fructose 6-phosphate from N-acetylneuraminate: step 1/5. Functionally, catalyzes the reversible aldol cleavage of N-acetylneuraminic acid (sialic acid; Neu5Ac) to form pyruvate and N-acetylmannosamine (ManNAc) via a Schiff base intermediate. The protein is N-acetylneuraminate lyase of Shigella boydii serotype 4 (strain Sb227).